Consider the following 154-residue polypeptide: NADPH-dependent 7-cyano-7-deazaguanine reductase (154 aa).

Over residues 1-11 (MAKKPVKDLKQ) the composition is skewed to basic and acidic residues. The disordered stretch occupies residues 1–31 (MAKKPVKDLKQLGHATPVPASPEEATLERVP). The Thioimide intermediate role is filled by Cys52. The active-site Proton donor is Asp59. Substrate is bound by residues 74 to 76 (IES) and 93 to 94 (HE).

Belongs to the GTP cyclohydrolase I family. QueF type 1 subfamily.

It localises to the cytoplasm. It catalyses the reaction 7-aminomethyl-7-carbaguanine + 2 NADP(+) = 7-cyano-7-deazaguanine + 2 NADPH + 3 H(+). It participates in tRNA modification; tRNA-queuosine biosynthesis. Functionally, catalyzes the NADPH-dependent reduction of 7-cyano-7-deazaguanine (preQ0) to 7-aminomethyl-7-deazaguanine (preQ1). This Parvibaculum lavamentivorans (strain DS-1 / DSM 13023 / NCIMB 13966) protein is NADPH-dependent 7-cyano-7-deazaguanine reductase.